We begin with the raw amino-acid sequence, 617 residues long: Transmembrane protein 232 (617 aa).

A helical transmembrane segment spans residues 129 to 149 (LVKIGYLIFLRLFVFFLHGHL). A coiled-coil region spans residues 567 to 604 (LKQIEAVCEAQNRKDEEEKEKIRFQEIMKQRERKLNKQ). A disordered region spans residues 598-617 (ERKLNKQTKPYEITPSEKKE).

It localises to the membrane. Functionally, plays a critical role for male fertility and sperm motility by regulating sperm cytoplasm removal and maintaining axoneme integrity. The polypeptide is Transmembrane protein 232 (Tmem232) (Rattus norvegicus (Rat)).